Reading from the N-terminus, the 470-residue chain is Putative multidrug resistance protein MdtD (470 aa).

Residues 1 to 11 (MTELPDNTRWQ) are Periplasmic-facing. A helical membrane pass occupies residues 12–32 (LWIVAFGFFMQSLDTTIVNTA). The Cytoplasmic segment spans residues 33 to 48 (LPSMAKSLGESPLHMH). The chain crosses the membrane as a helical span at residues 49-69 (MVVVSYVLTVAVMLPASGWLA). Topologically, residues 70–76 (DKIGVRN) are periplasmic. The chain crosses the membrane as a helical span at residues 77-97 (IFFAAIVLFTLGSLFCALSGT). Residues 98-101 (LNQL) are Cytoplasmic-facing. The helical transmembrane segment at 102-124 (VLARVLQGVGGAMMVPVGRLTVM) threads the bilayer. The Periplasmic portion of the chain corresponds to 125–137 (KIVPRAQYMAAMT). A helical membrane pass occupies residues 138–158 (FVTLPGQIGPLLGPALGGVLV). The Cytoplasmic segment spans residues 159–164 (EYASWH). Residues 165–185 (WIFLINIPVGIVGAMATFMLM) traverse the membrane as a helical segment. Residues 186–196 (PNYTIETRRFD) lie on the Periplasmic side of the membrane. Residues 197-217 (LPGFLLLAIGMAVLTLALDGS) form a helical membrane-spanning segment. Residues 218–224 (KSMGISP) lie on the Cytoplasmic side of the membrane. A helical transmembrane segment spans residues 225-245 (WTLAGLAAGGAAAILLYLFHA). Over 246–262 (KKNSGALFSLRLFRTPT) the chain is Periplasmic. Residues 263–283 (FSLGLLGSFAGRIGSGMLPFM) form a helical membrane-spanning segment. The Cytoplasmic segment spans residues 284-285 (TP). The chain crosses the membrane as a helical span at residues 286-306 (VFLQIGLGFSPFHAGLMMIPM). Over 307–341 (VLGSMGMKRIVVQIVNRFGYRRVLVATTLGLALVS) the chain is Periplasmic. The chain crosses the membrane as a helical span at residues 342 to 362 (LLFMSVALLGWYYLLPLVLLL). Residues 363–395 (QGMVNSARFSSMNTLTLKDLPDTLASSGNSLLS) lie on the Cytoplasmic side of the membrane. Residues 396 to 416 (MIMQLSMSIGVTIAGMLLGMF) traverse the membrane as a helical segment. The Periplasmic segment spans residues 417-430 (GQQHIGIDSSATHH). A helical transmembrane segment spans residues 431 to 451 (VFMYTWLCMAVIIALPAIIFA). Residues 452-470 (RVPNDTQQNMVISRRKRSL) are Cytoplasmic-facing.

Belongs to the major facilitator superfamily. TCR/Tet family.

It localises to the cell inner membrane. The polypeptide is Putative multidrug resistance protein MdtD (Salmonella agona (strain SL483)).